Consider the following 163-residue polypeptide: MCKEVIMSQKIIDLVTAVVAPAIPDPYELVDIEYEKIGSDYILSVLIDKPGGITVEDTADLTEIISPLLDTIQPDPFPDQYMLEVSSPGLERPLKTKEALKNAVGQYINVSLYKAIDKIKIFQGDLLAFDGETLTIDYLDKTRHKTVEIPYQTVAKARLAVKL.

Belongs to the RimP family.

The protein localises to the cytoplasm. Functionally, required for maturation of 30S ribosomal subunits. The sequence is that of Ribosome maturation factor RimP from Streptococcus thermophilus (strain CNRZ 1066).